The chain runs to 445 residues: Serine--tRNA ligase (445 aa).

250 to 252 is an L-serine binding site; it reads TAE. 281-283 is a binding site for ATP; the sequence is RAE. E304 is an L-serine binding site. Position 368-371 (368-371) interacts with ATP; the sequence is EISS. Position 404 (S404) interacts with L-serine.

It belongs to the class-II aminoacyl-tRNA synthetase family. Type-1 seryl-tRNA synthetase subfamily. Homodimer. The tRNA molecule binds across the dimer.

The protein localises to the cytoplasm. It carries out the reaction tRNA(Ser) + L-serine + ATP = L-seryl-tRNA(Ser) + AMP + diphosphate + H(+). It catalyses the reaction tRNA(Sec) + L-serine + ATP = L-seryl-tRNA(Sec) + AMP + diphosphate + H(+). It participates in aminoacyl-tRNA biosynthesis; selenocysteinyl-tRNA(Sec) biosynthesis; L-seryl-tRNA(Sec) from L-serine and tRNA(Sec): step 1/1. Catalyzes the attachment of serine to tRNA(Ser). Is also able to aminoacylate tRNA(Sec) with serine, to form the misacylated tRNA L-seryl-tRNA(Sec), which will be further converted into selenocysteinyl-tRNA(Sec). The polypeptide is Serine--tRNA ligase (Azorhizobium caulinodans (strain ATCC 43989 / DSM 5975 / JCM 20966 / LMG 6465 / NBRC 14845 / NCIMB 13405 / ORS 571)).